The following is a 955-amino-acid chain: Outer capsid protein VP2 (955 aa).

The protein belongs to the orbivirus VP2 family.

The protein resides in the virion. In terms of biological role, the VP2 protein is one of the two proteins (with VP5) which constitute the virus particle outer capsid. It is the major target of the host immunogenic response. Responsible for viral attachment to target host cell, probably by binding to sialic acid. This attachment induces virion internalization predominantly through clathrin-dependent endocytosis. The sequence is that of Outer capsid protein VP2 (Segment-2) from Antilocapra americana (Pronghorn).